A 620-amino-acid polypeptide reads, in one-letter code: 1-deoxy-D-xylulose-5-phosphate synthase (620 aa).

Residues H80 and 121 to 123 (GHS) each bind thiamine diphosphate. D152 is a binding site for Mg(2+). Thiamine diphosphate-binding positions include 153 to 154 (GA), N181, Y288, and E370. N181 serves as a coordination point for Mg(2+).

It belongs to the transketolase family. DXPS subfamily. Homodimer. Mg(2+) is required as a cofactor. It depends on thiamine diphosphate as a cofactor.

It carries out the reaction D-glyceraldehyde 3-phosphate + pyruvate + H(+) = 1-deoxy-D-xylulose 5-phosphate + CO2. The protein operates within metabolic intermediate biosynthesis; 1-deoxy-D-xylulose 5-phosphate biosynthesis; 1-deoxy-D-xylulose 5-phosphate from D-glyceraldehyde 3-phosphate and pyruvate: step 1/1. Functionally, catalyzes the acyloin condensation reaction between C atoms 2 and 3 of pyruvate and glyceraldehyde 3-phosphate to yield 1-deoxy-D-xylulose-5-phosphate (DXP). This is 1-deoxy-D-xylulose-5-phosphate synthase from Klebsiella pneumoniae subsp. pneumoniae (strain ATCC 700721 / MGH 78578).